A 395-amino-acid polypeptide reads, in one-letter code: 8-amino-3,8-dideoxy-alpha-D-manno-octulosonate transaminase (395 aa).

N6-(pyridoxal phosphate)lysine is present on lysine 186.

It belongs to the DegT/DnrJ/EryC1 family. It depends on pyridoxal 5'-phosphate as a cofactor.

It carries out the reaction 8-amino-3,8-dideoxy-alpha-D-manno-octulosonate + 2-oxoglutarate = 3,8-dideoxy-8-oxo-alpha-D-manno-octulosonate + L-glutamate. Its pathway is bacterial outer membrane biogenesis; lipopolysaccharide biosynthesis. Its function is as follows. Catalyzes the second (last) step of the biosynthesis of Kdo8N (8-amino-3,8-dideoxy-D-manno-octulosonate) from Kdo (3-deoxy-D-manno-octulosonate). The sequence is that of 8-amino-3,8-dideoxy-alpha-D-manno-octulosonate transaminase from Shewanella oneidensis (strain ATCC 700550 / JCM 31522 / CIP 106686 / LMG 19005 / NCIMB 14063 / MR-1).